Here is a 341-residue protein sequence, read N- to C-terminus: L-threonine 3-dehydrogenase (341 aa).

C38 is a Zn(2+) binding site. Catalysis depends on charge relay system residues T40 and H43. Zn(2+) is bound by residues H63, E64, C93, C96, C99, and C107. Residues I175, D195, R200, 262-264 (LGI), and 286-287 (IY) contribute to the NAD(+) site.

This sequence belongs to the zinc-containing alcohol dehydrogenase family. Homotetramer. Requires Zn(2+) as cofactor.

Its subcellular location is the cytoplasm. The enzyme catalyses L-threonine + NAD(+) = (2S)-2-amino-3-oxobutanoate + NADH + H(+). It functions in the pathway amino-acid degradation; L-threonine degradation via oxydo-reductase pathway; glycine from L-threonine: step 1/2. Functionally, catalyzes the NAD(+)-dependent oxidation of L-threonine to 2-amino-3-ketobutyrate. The chain is L-threonine 3-dehydrogenase from Escherichia fergusonii (strain ATCC 35469 / DSM 13698 / CCUG 18766 / IAM 14443 / JCM 21226 / LMG 7866 / NBRC 102419 / NCTC 12128 / CDC 0568-73).